The sequence spans 395 residues: Thyrotropin-releasing hormone receptor (395 aa).

The Extracellular portion of the chain corresponds to 1–30 (MENGTGDEQNHTGLLLSSQEFVTAEYQVVT). Asn-3 and Asn-10 each carry an N-linked (GlcNAc...) asparagine glycan. A helical membrane pass occupies residues 31 to 53 (ILLVLLICGLGIVGNIMVVLVVL). Over 54 to 63 (RTKHMRTPTN) the chain is Cytoplasmic. Residues 64–85 (CYLVSLAVADLMVLVAAGLPNI) traverse the membrane as a helical segment. Residues 86-101 (TESLYKSWVYGYVGCL) lie on the Extracellular side of the membrane. Cys-100 and Cys-181 form a disulfide bridge. The helical transmembrane segment at 102 to 123 (CITYLQYLGINASSFSITAFTI) threads the bilayer. Residues 124 to 146 (ERYIAICHPIKAQFLCTFSRAKK) lie on the Cytoplasmic side of the membrane. The chain crosses the membrane as a helical span at residues 147-170 (IIIFVWSFASVYCMLWFFLLDLNI). The Extracellular segment spans residues 171-195 (AVYKDTTVVSCGYKVSRSYYSPIYM). A helical transmembrane segment spans residues 196–217 (MDFGIFYVLPMVLATVLYGLIA). At 218–268 (RILFLNPIPSDPKENSNTWKNDMAQQNKTVNSKMTNKSFNSTIASRRQVTK) the chain is on the cytoplasmic side. Residues 269 to 290 (MLAVVVVLFAFLWMPYRTLVVV) form a helical membrane-spanning segment. At 291-298 (NSFLSSPF) the chain is on the extracellular side. Residues 299–321 (QENWFLLFCRICIYLNSAINPVI) form a helical membrane-spanning segment. The Cytoplasmic portion of the chain corresponds to 322–395 (YNLMSQKFRA…IGDTCLSSEA (74 aa)).

Belongs to the G-protein coupled receptor 1 family.

The protein resides in the cell membrane. Receptor for thyrotropin-releasing hormone (TRH). Upon ligand binding, this G-protein-coupled receptor triggers activation of the phosphatidylinositol (IP3)-calcium-protein kinase C (PKC) pathway. This is Thyrotropin-releasing hormone receptor (TRHR) from Gallus gallus (Chicken).